We begin with the raw amino-acid sequence, 56 residues long: uncharacterized protein (56 aa).

The helical transmembrane segment at 30 to 52 (IKIGIICVIITWAIFSINHHHTI) threads the bilayer.

Its subcellular location is the membrane. This is an uncharacterized protein from Dictyostelium discoideum (Social amoeba).